The following is a 475-amino-acid chain: Ras-GEF domain-containing family member 1A (475 aa).

The 132-residue stretch at 33 to 164 (QDGSLVSGSL…SISQMTQNVL (132 aa)) folds into the N-terminal Ras-GEF domain. Positions 208–455 (DPLILAQQLT…FLASFENEGP (248 aa)) constitute a Ras-GEF domain.

Functionally, guanine nucleotide exchange factor (GEF) with specificity for rap2a and other Ras family proteins (in vitro). Plays a role in cell migration. The sequence is that of Ras-GEF domain-containing family member 1A (rasgef1a) from Xenopus tropicalis (Western clawed frog).